We begin with the raw amino-acid sequence, 1171 residues long: ATP-dependent helicase/deoxyribonuclease subunit B (1171 aa).

The region spanning 1-343 (MSLRFVIGRA…LVAEENYRYR (343 aa)) is the UvrD-like helicase ATP-binding domain. Residue 8-15 (GRAGSGKS) participates in ATP binding. The 307-residue stretch at 281–587 (MEQPRFHSPA…QFANIPPSLD (307 aa)) folds into the UvrD-like helicase C-terminal domain. The [4Fe-4S] cluster site is built by C805, C1129, C1132, and C1138.

Belongs to the helicase family. AddB/RexB type 1 subfamily. In terms of assembly, heterodimer of AddA and AddB. Mg(2+) is required as a cofactor. The cofactor is [4Fe-4S] cluster.

The heterodimer acts as both an ATP-dependent DNA helicase and an ATP-dependent, dual-direction single-stranded exonuclease. Recognizes the chi site generating a DNA molecule suitable for the initiation of homologous recombination. The AddB subunit has 5' -&gt; 3' nuclease activity but not helicase activity. The protein is ATP-dependent helicase/deoxyribonuclease subunit B of Bacillus thuringiensis (strain Al Hakam).